We begin with the raw amino-acid sequence, 1108 residues long: Valine--tRNA ligase, mitochondrial 1 (1108 aa).

A mitochondrion-targeting transit peptide spans methionine 1–serine 46. The span at glutamate 57 to lysine 93 shows a compositional bias: basic and acidic residues. The tract at residues glutamate 57–lysine 138 is disordered. Residues proline 177–histidine 187 carry the 'HIGH' region motif. Positions lysine 695 to serine 699 match the 'KMSKS' region motif. Residue lysine 698 participates in ATP binding. Residues alanine 1032–threonine 1064 adopt a coiled-coil conformation.

It belongs to the class-I aminoacyl-tRNA synthetase family.

It is found in the mitochondrion. The protein resides in the cytoplasm. Its subcellular location is the cytosol. The enzyme catalyses tRNA(Val) + L-valine + ATP = L-valyl-tRNA(Val) + AMP + diphosphate. Functionally, required for embryo development and seed viability. The sequence is that of Valine--tRNA ligase, mitochondrial 1 from Arabidopsis thaliana (Mouse-ear cress).